Reading from the N-terminus, the 512-residue chain is Hyaluronidase PH-20 (512 aa).

The N-terminal stretch at 1 to 35 (MGELQFKWLFWRSFAESGGTFQTVLIFLFIPYSLT) is a signal peptide. 2 disulfides stabilise this stretch: cysteine 60/cysteine 351 and cysteine 223/cysteine 237. A glycan (N-linked (GlcNAc...) asparagine) is linked at asparagine 63. Residue glutamate 147 is the Proton donor of the active site. N-linked (GlcNAc...) asparagine glycosylation is found at asparagine 165 and asparagine 179. Asparagine 368 carries N-linked (GlcNAc...) asparagine glycosylation. Intrachain disulfides connect cysteine 376–cysteine 387, cysteine 381–cysteine 435, and cysteine 437–cysteine 464. Asparagine 408 carries an N-linked (GlcNAc...) asparagine glycan.

This sequence belongs to the glycosyl hydrolase 56 family.

It localises to the cell membrane. It carries out the reaction Random hydrolysis of (1-&gt;4)-linkages between N-acetyl-beta-D-glucosamine and D-glucuronate residues in hyaluronate.. Its function is as follows. Involved in sperm-egg adhesion. Upon fertilization sperm must first penetrate a layer of cumulus cells that surrounds the egg before reaching the zona pellucida. The cumulus cells are embedded in a matrix containing hyaluronic acid which is formed prior to ovulation. This protein aids in penetrating the layer of cumulus cells by digesting hyaluronic acid. The chain is Hyaluronidase PH-20 (Spam1) from Rattus norvegicus (Rat).